The primary structure comprises 225 residues: Small ribosomal subunit protein uS2 (225 aa).

Belongs to the universal ribosomal protein uS2 family.

This chain is Small ribosomal subunit protein uS2, found in Metallosphaera sedula (strain ATCC 51363 / DSM 5348 / JCM 9185 / NBRC 15509 / TH2).